Consider the following 122-residue polypeptide: Large ribosomal subunit protein bL12 (122 aa).

Belongs to the bacterial ribosomal protein bL12 family. Homodimer. Part of the ribosomal stalk of the 50S ribosomal subunit. Forms a multimeric L10(L12)X complex, where L10 forms an elongated spine to which 2 to 4 L12 dimers bind in a sequential fashion. Binds GTP-bound translation factors.

Its function is as follows. Forms part of the ribosomal stalk which helps the ribosome interact with GTP-bound translation factors. Is thus essential for accurate translation. The polypeptide is Large ribosomal subunit protein bL12 (Vibrio vulnificus (strain CMCP6)).